The primary structure comprises 296 residues: tRNA dimethylallyltransferase (296 aa).

Residue 2–9 (GPTASGKT) participates in ATP binding. Position 4–9 (4–9 (TASGKT)) interacts with substrate. 3 interaction with substrate tRNA regions span residues 27 to 30 (DSAL), 151 to 155 (QRLSR), and 232 to 237 (RCVGYR).

The protein belongs to the IPP transferase family. As to quaternary structure, monomer. Requires Mg(2+) as cofactor.

It catalyses the reaction adenosine(37) in tRNA + dimethylallyl diphosphate = N(6)-dimethylallyladenosine(37) in tRNA + diphosphate. Catalyzes the transfer of a dimethylallyl group onto the adenine at position 37 in tRNAs that read codons beginning with uridine, leading to the formation of N6-(dimethylallyl)adenosine (i(6)A). The sequence is that of tRNA dimethylallyltransferase from Shewanella frigidimarina (strain NCIMB 400).